The sequence spans 182 residues: Nucleoside triphosphate/diphosphate phosphatase (182 aa).

The active-site Proton donor is the Arg27. Mg(2+) is bound by residues Asn91, Asp107, Asp109, Asp111, Asp124, and Glu127.

Belongs to the Ntdp family. It depends on Mg(2+) as a cofactor.

The catalysed reaction is a ribonucleoside 5'-triphosphate + H2O = a ribonucleoside 5'-diphosphate + phosphate + H(+). The enzyme catalyses a ribonucleoside 5'-diphosphate + H2O = a ribonucleoside 5'-phosphate + phosphate + H(+). In terms of biological role, has nucleoside phosphatase activity towards nucleoside triphosphates and nucleoside diphosphates. The protein is Nucleoside triphosphate/diphosphate phosphatase of Lactiplantibacillus plantarum (strain ATCC BAA-793 / NCIMB 8826 / WCFS1) (Lactobacillus plantarum).